The primary structure comprises 130 residues: Small ribosomal subunit protein bS16 (130 aa).

Residues 82–130 (VLPKTERNNPKKAVPGKKAQDRAEEKAAKAAEASEAPADEAPAEEAAAE) are disordered. Residues 99-110 (KAQDRAEEKAAK) show a composition bias toward basic and acidic residues. Residues 118 to 130 (PADEAPAEEAAAE) are compositionally biased toward acidic residues.

Belongs to the bacterial ribosomal protein bS16 family.

This is Small ribosomal subunit protein bS16 from Dinoroseobacter shibae (strain DSM 16493 / NCIMB 14021 / DFL 12).